The sequence spans 171 residues: UPF0312 protein SAV2687 (171 aa).

This sequence belongs to the UPF0312 family.

This is UPF0312 protein SAV2687 from Staphylococcus aureus (strain Mu50 / ATCC 700699).